The primary structure comprises 513 residues: Histidine ammonia-lyase (513 aa).

Positions 144–146 (ASG) form a cross-link, 5-imidazolinone (Ala-Gly). Position 145 is a 2,3-didehydroalanine (Ser) (Ser-145).

The protein belongs to the PAL/histidase family. In terms of processing, contains an active site 4-methylidene-imidazol-5-one (MIO), which is formed autocatalytically by cyclization and dehydration of residues Ala-Ser-Gly.

The protein localises to the cytoplasm. It carries out the reaction L-histidine = trans-urocanate + NH4(+). The protein operates within amino-acid degradation; L-histidine degradation into L-glutamate; N-formimidoyl-L-glutamate from L-histidine: step 1/3. The protein is Histidine ammonia-lyase of Streptococcus pyogenes serotype M6 (strain ATCC BAA-946 / MGAS10394).